The following is a 247-amino-acid chain: Peroxisomal membrane protein 11A (247 aa).

Topologically, residues 1 to 83 (MDAFTRFTNQ…SIHATDLVPR (83 aa)) are cytoplasmic. The chain crosses the membrane as a helical span at residues 84–105 (LCLTLANLNRVIYFICDTILWV). Topologically, residues 106-219 (RSVGLTSGIN…DQLGIYKSNP (114 aa)) are lumenal. Residues 220–239 (GIIGLGGLVSSIAGMITVAY) traverse the membrane as a helical segment. A required for homodimerization, interaction with PEX11G, and peroxisomal localization region spans residues 220–239 (GIIGLGGLVSSIAGMITVAY). Residues 240–247 (PQMKLKTR) lie on the Cytoplasmic side of the membrane.

The protein belongs to the peroxin-11 family. As to quaternary structure, homodimer. Heterodimer with PEX11G. Probably interacts with COPB2 and COPA. Interacts with PEX19. Interacts with FIS1. Post-translationally, seems not to be N-glycosylated.

The protein resides in the peroxisome membrane. May be involved in peroxisomal proliferation and may regulate peroxisomes division. May mediate binding of coatomer proteins to the peroxisomal membrane. Promotes membrane protrusion and elongation on the peroxisomal surface. The protein is Peroxisomal membrane protein 11A (PEX11A) of Homo sapiens (Human).